A 372-amino-acid chain; its full sequence is Queuine tRNA-ribosyltransferase (372 aa).

Residue Asp89 is the Proton acceptor of the active site. Substrate is bound by residues 89–93, Asp161, and Gly232; that span reads DSGGF. Positions 262–268 are RNA binding; the sequence is GIGDLPS. Asp281 (nucleophile) is an active-site residue. The interval 286–290 is RNA binding; important for wobble base 34 recognition; the sequence is TKAAR. Zn(2+) contacts are provided by Cys319, Cys321, Cys324, and His351.

This sequence belongs to the queuine tRNA-ribosyltransferase family. As to quaternary structure, homodimer. Within each dimer, one monomer is responsible for RNA recognition and catalysis, while the other monomer binds to the replacement base PreQ1. Zn(2+) serves as cofactor.

The enzyme catalyses 7-aminomethyl-7-carbaguanine + guanosine(34) in tRNA = 7-aminomethyl-7-carbaguanosine(34) in tRNA + guanine. It functions in the pathway tRNA modification; tRNA-queuosine biosynthesis. Its function is as follows. Catalyzes the base-exchange of a guanine (G) residue with the queuine precursor 7-aminomethyl-7-deazaguanine (PreQ1) at position 34 (anticodon wobble position) in tRNAs with GU(N) anticodons (tRNA-Asp, -Asn, -His and -Tyr). Catalysis occurs through a double-displacement mechanism. The nucleophile active site attacks the C1' of nucleotide 34 to detach the guanine base from the RNA, forming a covalent enzyme-RNA intermediate. The proton acceptor active site deprotonates the incoming PreQ1, allowing a nucleophilic attack on the C1' of the ribose to form the product. After dissociation, two additional enzymatic reactions on the tRNA convert PreQ1 to queuine (Q), resulting in the hypermodified nucleoside queuosine (7-(((4,5-cis-dihydroxy-2-cyclopenten-1-yl)amino)methyl)-7-deazaguanosine). This chain is Queuine tRNA-ribosyltransferase, found in Chlamydia trachomatis serovar L2 (strain ATCC VR-902B / DSM 19102 / 434/Bu).